The sequence spans 434 residues: ATP-dependent RNA helicase RhlB (434 aa).

The Q motif motif lies at 9-37 (KKFADFPLKPEILAALNENGFEFCTPIQA). Residues 40–219 (LPILLNAKDI…YDHMNDPEKV (180 aa)) enclose the Helicase ATP-binding domain. 53 to 60 (AQTGTGKT) contributes to the ATP binding site. Residues 165 to 168 (DEAD) carry the DEAD box motif. The Helicase C-terminal domain maps to 243 to 390 (KMRLLLSLIE…VSNYDKDALL (148 aa)). The segment at 390 to 434 (LDDIPPPARIHRKPPTSRTRDGGSKGAHRSGGNTSRPPRHRTRRP) is disordered.

It belongs to the DEAD box helicase family. RhlB subfamily. In terms of assembly, component of the RNA degradosome, which is a multiprotein complex involved in RNA processing and mRNA degradation.

The protein localises to the cytoplasm. It carries out the reaction ATP + H2O = ADP + phosphate + H(+). DEAD-box RNA helicase involved in RNA degradation. Has RNA-dependent ATPase activity and unwinds double-stranded RNA. The protein is ATP-dependent RNA helicase RhlB of Shewanella frigidimarina (strain NCIMB 400).